The chain runs to 71 residues: uncharacterized protein (71 aa).

This is an uncharacterized protein from Escherichia coli (strain K12).